We begin with the raw amino-acid sequence, 318 residues long: Malate dehydrogenase (318 aa).

NAD(+) is bound by residues 10-15 and aspartate 34; that span reads GGGQIG. Arginine 83 and arginine 89 together coordinate substrate. NAD(+)-binding positions include asparagine 96 and 119–121; that span reads ISN. Positions 121 and 152 each coordinate substrate. Histidine 176 acts as the Proton acceptor in catalysis.

It belongs to the LDH/MDH superfamily. MDH type 3 family.

It catalyses the reaction (S)-malate + NAD(+) = oxaloacetate + NADH + H(+). Its function is as follows. Catalyzes the reversible oxidation of malate to oxaloacetate. The chain is Malate dehydrogenase from Geotalea uraniireducens (strain Rf4) (Geobacter uraniireducens).